Reading from the N-terminus, the 392-residue chain is ATP phosphoribosyltransferase regulatory subunit (392 aa).

This sequence belongs to the class-II aminoacyl-tRNA synthetase family. HisZ subfamily. In terms of assembly, heteromultimer composed of HisG and HisZ subunits.

It is found in the cytoplasm. It participates in amino-acid biosynthesis; L-histidine biosynthesis; L-histidine from 5-phospho-alpha-D-ribose 1-diphosphate: step 1/9. In terms of biological role, required for the first step of histidine biosynthesis. May allow the feedback regulation of ATP phosphoribosyltransferase activity by histidine. The sequence is that of ATP phosphoribosyltransferase regulatory subunit from Synechococcus sp. (strain WH7803).